A 150-amino-acid chain; its full sequence is Dual specificity protein phosphatase 23 (150 aa).

The Tyrosine-protein phosphatase domain maps to 7 to 150 (NFSWVLPGRL…AVFQFYQRTK (144 aa)). Cys95 (phosphocysteine intermediate) is an active-site residue.

Belongs to the protein-tyrosine phosphatase family. Non-receptor class dual specificity subfamily. As to expression, widely expressed. Highly expressed in spleen, prostate, colon, adrenal gland, mammary gland, thyroid and trachea. Expressed at lower level in uterus, small intestine, bladder, bone marrow, brain, spinal cord and stomach.

Its subcellular location is the cytoplasm. The protein localises to the cytosol. The protein resides in the nucleus. It carries out the reaction O-phospho-L-tyrosyl-[protein] + H2O = L-tyrosyl-[protein] + phosphate. It catalyses the reaction O-phospho-L-seryl-[protein] + H2O = L-seryl-[protein] + phosphate. The enzyme catalyses O-phospho-L-threonyl-[protein] + H2O = L-threonyl-[protein] + phosphate. Its function is as follows. Protein phosphatase that mediates dephosphorylation of proteins phosphorylated on Tyr and Ser/Thr residues. In vitro, it can dephosphorylate p44-ERK1 (MAPK3) but not p54 SAPK-beta (MAPK10) in vitro. Able to enhance activation of JNK and p38 (MAPK14). In Homo sapiens (Human), this protein is Dual specificity protein phosphatase 23 (DUSP23).